We begin with the raw amino-acid sequence, 241 residues long: MAAESSNPRTVEEIFKDFSGRRSGFLRALSVDVDKFYSLCDPEMENLCLYGHPNGTWEVNLPAEEVPPELPEPALGINFARDGMQRKDWLSLVAVHSDCWLLSVSSYFGARLNRNERKRLFSLINDLPTLFEVVTGRKPIKDGKPSMDLGSKSRNGVKRSIEGQTKSTPKLMEESYEDEDDEHGDTLCGSCGGNYTNDEFWICCDVCERWYHGKCVKITPAKAESIKQYKCPSCCTKKGRQ.

A2 is modified (N-acetylalanine). The segment at 142-182 is disordered; it reads DGKPSMDLGSKSRNGVKRSIEGQTKSTPKLMEESYEDEDDE. Residues 185-237 form a PHD-type zinc finger; sequence DTLCGSCGGNYTNDEFWICCDVCERWYHGKCVKITPAKAESIKQYKCPSCCTK.

This sequence belongs to the Alfin family. In terms of assembly, interacts with H3K4me3 and to a lesser extent with H3K4me2. Ubiquitously expressed.

It localises to the nucleus. Functionally, histone-binding component that specifically recognizes H3 tails trimethylated on 'Lys-4' (H3K4me3), which mark transcription start sites of virtually all active genes. In Arabidopsis thaliana (Mouse-ear cress), this protein is PHD finger protein ALFIN-LIKE 1 (AL1).